The primary structure comprises 700 residues: Acetoacetyl-CoA synthetase (700 aa).

Positions 1 to 35 (MTAVSANGKTTEKHENGAHTNGTTNGTTNGSMNGN) are disordered. Positions 18 to 35 (AHTNGTTNGTTNGSMNGN) are enriched in low complexity.

Belongs to the ATP-dependent AMP-binding enzyme family. As to expression, present in most cells of the organism.

Its subcellular location is the cytoplasm. It localises to the nucleus. The enzyme catalyses acetoacetate + ATP + CoA = acetoacetyl-CoA + AMP + diphosphate. Its function is as follows. Activates acetoacetate to acetoacetyl-CoA. Negatively regulates let-60 Ras activity during vulval induction. In Caenorhabditis elegans, this protein is Acetoacetyl-CoA synthetase (sur-5).